Consider the following 471-residue polypeptide: Tryptophanase (471 aa).

An N6-acetyllysine mark is found at Lys-5, Lys-115, and Lys-156. Lys-270 bears the N6-(pyridoxal phosphate)lysine mark. The residue at position 450 (Lys-450) is an N6-acetyllysine.

The protein belongs to the beta-eliminating lyase family. Homotetramer. Pyridoxal 5'-phosphate is required as a cofactor.

The enzyme catalyses L-tryptophan + H2O = indole + pyruvate + NH4(+). The protein operates within amino-acid degradation; L-tryptophan degradation via pyruvate pathway; indole and pyruvate from L-tryptophan: step 1/1. This Shigella boydii serotype 18 (strain CDC 3083-94 / BS512) protein is Tryptophanase.